The primary structure comprises 316 residues: Transaldolase A (316 aa).

Lysine 131 (schiff-base intermediate with substrate) is an active-site residue.

This sequence belongs to the transaldolase family. Type 1 subfamily. In terms of assembly, homodimer.

The protein localises to the cytoplasm. It catalyses the reaction D-sedoheptulose 7-phosphate + D-glyceraldehyde 3-phosphate = D-erythrose 4-phosphate + beta-D-fructose 6-phosphate. Its pathway is carbohydrate degradation; pentose phosphate pathway; D-glyceraldehyde 3-phosphate and beta-D-fructose 6-phosphate from D-ribose 5-phosphate and D-xylulose 5-phosphate (non-oxidative stage): step 2/3. Its function is as follows. Transaldolase is important for the balance of metabolites in the pentose-phosphate pathway. The sequence is that of Transaldolase A from Salmonella typhimurium (strain LT2 / SGSC1412 / ATCC 700720).